The primary structure comprises 314 residues: Carbamate kinase (314 aa).

It belongs to the carbamate kinase family. Homodimer.

The protein localises to the cytoplasm. The enzyme catalyses hydrogencarbonate + NH4(+) + ATP = carbamoyl phosphate + ADP + H2O + H(+). It functions in the pathway metabolic intermediate metabolism; carbamoyl phosphate degradation; CO(2) and NH(3) from carbamoyl phosphate: step 1/1. The chain is Carbamate kinase (arcC) from Clostridium perfringens (strain 13 / Type A).